The sequence spans 391 residues: F-box/kelch-repeat protein At4g05080 (391 aa).

One can recognise an F-box domain in the interval 2 to 49; that stretch reads TMMFDLTQDLVKEILSRVPITSLGAVRSTCKGWNALSKDRILCKAKPK. 2 Kelch repeats span residues 100–143 and 144–194; these read HMYY…TFCL and RYDN…SASV. The segment covering 369–385 has biased composition (basic residues); that stretch reads RRRRERNSKRKEKKRKG. The tract at residues 369 to 391 is disordered; sequence RRRRERNSKRKEKKRKGTTNNKV.

The protein is F-box/kelch-repeat protein At4g05080 of Arabidopsis thaliana (Mouse-ear cress).